The following is a 379-amino-acid chain: Glucose-insensitive transcription protein 7 (379 aa).

The CS domain maps to 181–272 (SNRIRYDWSQ…VSEIKWEALV (92 aa)). The region spanning 292–379 (ASGNTKNKAK…PPQGMEPKKF (88 aa)) is the SGS domain. A disordered region spans residues 345–379 (SYTESNGTALSTNWKDVKSKTFETKPPQGMEPKKF). A compositionally biased stretch (polar residues) spans 346–358 (YTESNGTALSTNW).

In terms of biological role, involved in cyclic AMP (cAMP) pathway, possibly by participating in the assembly or the conformational activation of specific multiprotein complexes. The protein is Glucose-insensitive transcription protein 7 (git7) of Schizosaccharomyces pombe (strain 972 / ATCC 24843) (Fission yeast).